Consider the following 178-residue polypeptide: uncharacterized protein (178 aa).

This is an uncharacterized protein from Sinorhizobium fredii (strain NBRC 101917 / NGR234).